A 462-amino-acid chain; its full sequence is MDKDSQGLLDSSLMASGTASRSEDEESLAGQKRASSQALGTIPKRRSSSRFIKRKKFDDELVESSLAKSSTRAKGASGVEPGRCSGSEPSSSEKKKVSKAPSTPVPPSPAPAPGLTKRVKKSKQPLQVTKDLGRWKPADDLLLINAVLQTNDLTSVHLGVKFSCRFTLREVQERWYALLYDPVISKLACQAMRQLHPEAIAAIQSKALFSKAEEQLLSKVGSTSQPTLETFQDLLHRHPDAFYLARTAKALQAHWQLMKQYYLLEDQTVQPLPKGDQVLNFSDAEDLIDDSKLKDMRDEVLEHELMVADRRQKREIRQLEQELHKWQVLVDSITGMSSPDFDNQTLAVLRGRMVRYLMRSREITLGRATKDNQIDVDLSLEGPAWKISRKQGVIKLKNNGDFFIANEGRRPIYIDGRPVLCGSKWRLSNNSVVEIASLRFVFLINQDLIALIRAEAAKITPQ.

M1 is modified (N-acetylmethionine). Residues 1–130 (MDKDSQGLLD…KSKQPLQVTK (130 aa)) form a disordered region. S22 carries the phosphoserine modification. The segment covering 43 to 55 (PKRRSSSRFIKRK) has biased composition (basic residues). The residue at position 102 (S102) is a Phosphoserine. The residue at position 103 (T103) is a Phosphothreonine. The segment covering 103-112 (TPVPPSPAPA) has biased composition (pro residues). At S108 the chain carries Phosphoserine. A Nuclear localization signal motif is present at residues 113-123 (PGLTKRVKKSK). N6-acetyllysine is present on residues K123 and K130. The residue at position 282 (S282) is a Phosphoserine. Residues 301 to 335 (LEHELMVADRRQKREIRQLEQELHKWQVLVDSITG) adopt a coiled-coil conformation. Positions 363–419 (ITLGRATKDNQIDVDLSLEGPAWKISRKQGVIKLKNNGDFFIANEGRRPIYIDGRPV) constitute an FHA domain. A UBR5-degron motif is present at residues 389-396 (RKQGVIKL).

As to quaternary structure, component of the chromatin remodeling INO80 complex; specifically part of a complex module associated with the N-terminus of INO80. Component of some MLL1/MLL complex, at least composed of the core components KMT2A/MLL1, ASH2L, HCFC1, WDR5 and RBBP5, as well as the facultative components BACC1, CHD8, E2F6, HSP70, INO80C, KANSL1, LAS1L, MAX, MCRS1, MGA, KAT8/MOF, PELP1, PHF20, PRP31, RING2, RUVB1/TIP49A, RUVB2/TIP49B, SENP3, TAF1, TAF4, TAF6, TAF7, TAF9 and TEX10. Component of the NSL complex at least composed of MOF/KAT8, KANSL1, KANSL2, KANSL3, MCRS1, PHF20, OGT1/OGT, WDR5 and HCFC1. Interacts with NOP2. Interacts with PINX1. Interacts with TERT. Interacts with CCDC85B. Interacts with DAXX. Interacts (via N-terminus) with FMR1 (via phosphorylated form). Interacts with FXR1 and FXR2. Interacts (via C-terminus) with NDE1 (via C-terminus); phosphorylation of NDE1 inhibits the interaction. Interacts (via C-terminus) with ZNF375. Interacts (via C-terminus) with active GTP-bound RHEB (via N-terminus) under conditions of high amino acid concentration; the interaction promotes mTORC1 complex activation by RHEB. Interacts (via N-terminus) with the mTORC1 complex; the interaction ensures mTORC1 activation by RHEB. Interacts with DYNC1I1; the interaction is required for the proper distribution of centriolar satellites. Interacts with TTBK2; the interaction is required for recruitment of TTBK2 to the mother centriole. Interacts with KIF2A; the interaction occurs during mitosis and facilitates chromosome alignment. (Microbial infection) Interacts with Herpes simplex virus ICP22. In terms of processing, ubiquitinated by UBR5 when not assembled in the INO80 complex, leading to its degradation: UBR5 recognizes and binds a degron that is not accessible when MCRS1 is part of the INO80 complex. Post-translationally, phosphorylated by AURKA on Ser-35 and/or Ser-36 during mitosis which is required for kinetochore fiber assembly and mitotic progression but not for spindle localization or for chromosome-induced microtuble aster formation. Also phosphorylated by AURKA on Ser-85 and/or Ser-87. Phosphorylated by TTK/MPS1 which enhances recruitment of KIF2A to the minus end of spindle microtubules and facilitates precise chromosome segregation. Detected in testis, and at lower levels in spleen, thymus, prostate, uterus, small intestine, colon and leukocytes.

It is found in the nucleus. It localises to the nucleolus. The protein resides in the cytoplasm. The protein localises to the cytoskeleton. Its subcellular location is the microtubule organizing center. It is found in the centrosome. It localises to the spindle pole. The protein resides in the chromosome. The protein localises to the centromere. Its subcellular location is the kinetochore. It is found in the lysosome. It localises to the centriolar satellite. Its function is as follows. Modulates the transcription repressor activity of DAXX by recruiting it to the nucleolus. As part of the NSL complex, may be involved in acetylation of nucleosomal histone H4 on several lysine residues. Putative regulatory component of the chromatin remodeling INO80 complex which is involved in transcriptional regulation, DNA replication and probably DNA repair. May also be an inhibitor of TERT telomerase activity. Binds to G-quadruplex structures in mRNA. Binds to RNA homomer poly(G) and poly(U). Maintains RHEB at the lysosome in its active GTP-bound form and prevents its interaction with the mTORC1 complex inhibitor TSC2, ensuring activation of the mTORC1 complex by RHEB. Stabilizes the minus ends of kinetochore fibers by protecting them from depolymerization, ensuring functional spindle assembly during mitosis. Following phosphorylation by TTK/MPS1, enhances recruitment of KIF2A to the minus ends of mitotic spindle microtubules which promotes chromosome alignment. Regulates the morphology of microtubule minus ends in mitotic spindle by maintaining them in a closed conformation characterized by the presence of an electron-dense cap. Regulates G2/M transition and spindle assembly during oocyte meiosis. Mediates histone modifications and transcriptional regulation in germinal vesicle oocytes which are required for meiotic progression. Also regulates microtubule nucleation and spindle assembly by activating aurora kinases during oocyte meiosis. Contributes to the establishment of centriolar satellites and also plays a role in primary cilium formation by recruiting TTBK2 to the mother centriole which is necessary for removal of the CP110 cap from the mother centriole, an early step in ciliogenesis. Required for epiblast development during early embryogenesis. Essential for cell viability. The chain is Microspherule protein 1 (MCRS1) from Homo sapiens (Human).